The following is a 210-amino-acid chain: DNA-directed RNA polymerase subunit 5-like protein 1 (210 aa).

This sequence belongs to the archaeal Rpo5/eukaryotic RPB5 RNA polymerase subunit family.

The protein localises to the nucleus. The chain is DNA-directed RNA polymerase subunit 5-like protein 1 (NRPB5L1) from Arabidopsis thaliana (Mouse-ear cress).